The chain runs to 173 residues: Dual-action ribosomal maturation protein DarP (173 aa).

This sequence belongs to the DarP family.

It is found in the cytoplasm. Member of a network of 50S ribosomal subunit biogenesis factors which assembles along the 30S-50S interface, preventing incorrect 23S rRNA structures from forming. Promotes peptidyl transferase center (PTC) maturation. This is Dual-action ribosomal maturation protein DarP from Pseudomonas putida (strain ATCC 700007 / DSM 6899 / JCM 31910 / BCRC 17059 / LMG 24140 / F1).